A 181-amino-acid chain; its full sequence is ATP synthase subunit delta (181 aa).

The protein belongs to the ATPase delta chain family. F-type ATPases have 2 components, F(1) - the catalytic core - and F(0) - the membrane proton channel. F(1) has five subunits: alpha(3), beta(3), gamma(1), delta(1), epsilon(1). F(0) has three main subunits: a(1), b(2) and c(10-14). The alpha and beta chains form an alternating ring which encloses part of the gamma chain. F(1) is attached to F(0) by a central stalk formed by the gamma and epsilon chains, while a peripheral stalk is formed by the delta and b chains.

The protein localises to the cell inner membrane. F(1)F(0) ATP synthase produces ATP from ADP in the presence of a proton or sodium gradient. F-type ATPases consist of two structural domains, F(1) containing the extramembraneous catalytic core and F(0) containing the membrane proton channel, linked together by a central stalk and a peripheral stalk. During catalysis, ATP synthesis in the catalytic domain of F(1) is coupled via a rotary mechanism of the central stalk subunits to proton translocation. Its function is as follows. This protein is part of the stalk that links CF(0) to CF(1). It either transmits conformational changes from CF(0) to CF(1) or is implicated in proton conduction. In Syntrophus aciditrophicus (strain SB), this protein is ATP synthase subunit delta.